The primary structure comprises 484 residues: Phosphomevalonate kinase erg8 (484 aa).

A disordered region spans residues 54-77; the sequence is REAASGSAHGRSDTPQAEGNVHGD. 184–194 is an ATP binding site; the sequence is AHKTGLGSSAA.

Belongs to the GHMP kinase family. Mevalonate kinase subfamily.

The enzyme catalyses (R)-5-phosphomevalonate + ATP = (R)-5-diphosphomevalonate + ADP. Its pathway is isoprenoid biosynthesis; isopentenyl diphosphate biosynthesis via mevalonate pathway; isopentenyl diphosphate from (R)-mevalonate: step 2/3. In terms of biological role, phosphomevalonate kinase; part of the second module of ergosterol biosynthesis pathway that includes the middle steps of the pathway. Erg8 converts 5-phosphomevalonate to 5-diphosphomevalonate. The second module is carried out in the vacuole and involves the formation of farnesyl diphosphate, which is also an important intermediate in the biosynthesis of ubiquinone, dolichol, heme and prenylated proteins. Activity by the mevalonate kinase erg12 (AFUA_4G07780) first converts mevalonate into 5-phosphomevalonate. 5-phosphomevalonate is then further converted to 5-diphosphomevalonate by the phosphomevalonate kinase erg8 (AFUA_5G10680). The diphosphomevalonate decarboxylase mvd1 (AFUA_4G07130) then produces isopentenyl diphosphate. The isopentenyl-diphosphate delta-isomerase idi1 (AFUA_6G11160) then catalyzes the 1,3-allylic rearrangement of the homoallylic substrate isopentenyl (IPP) to its highly electrophilic allylic isomer, dimethylallyl diphosphate (DMAPP). Finally the farnesyl diphosphate synthase erg20 (AFUA_5G02450) catalyzes the sequential condensation of isopentenyl pyrophosphate with dimethylallyl pyrophosphate, and then with the resultant geranylpyrophosphate to the ultimate product farnesyl pyrophosphate. The sequence is that of Phosphomevalonate kinase erg8 from Aspergillus fumigatus (strain ATCC MYA-4609 / CBS 101355 / FGSC A1100 / Af293) (Neosartorya fumigata).